The primary structure comprises 383 residues: 8-amino-7-oxononanoate synthase (383 aa).

Arg21 provides a ligand contact to substrate. Pyridoxal 5'-phosphate is bound at residue 108–109 (GY). His133 is a binding site for substrate. 3 residues coordinate pyridoxal 5'-phosphate: Ser179, His207, and Thr233. Residue Lys236 is modified to N6-(pyridoxal phosphate)lysine. Thr350 is a substrate binding site.

The protein belongs to the class-II pyridoxal-phosphate-dependent aminotransferase family. BioF subfamily. In terms of assembly, homodimer. Requires pyridoxal 5'-phosphate as cofactor.

The catalysed reaction is 6-carboxyhexanoyl-[ACP] + L-alanine + H(+) = (8S)-8-amino-7-oxononanoate + holo-[ACP] + CO2. It functions in the pathway cofactor biosynthesis; biotin biosynthesis. In terms of biological role, catalyzes the decarboxylative condensation of pimeloyl-[acyl-carrier protein] and L-alanine to produce 8-amino-7-oxononanoate (AON), [acyl-carrier protein], and carbon dioxide. The sequence is that of 8-amino-7-oxononanoate synthase from Yersinia pseudotuberculosis serotype IB (strain PB1/+).